Reading from the N-terminus, the 225-residue chain is UPF0502 protein Ajs_3392 (225 aa).

Belongs to the UPF0502 family.

The sequence is that of UPF0502 protein Ajs_3392 from Acidovorax sp. (strain JS42).